The following is a 298-amino-acid chain: N-acetylmuramic acid 6-phosphate etherase (298 aa).

In terms of domain architecture, SIS spans 57–220 (IAAAFGKGGR…STGAMIRTGK (164 aa)). Glutamate 85 functions as the Proton donor in the catalytic mechanism. Glutamate 116 is a catalytic residue.

This sequence belongs to the GCKR-like family. MurNAc-6-P etherase subfamily. In terms of assembly, homodimer.

It carries out the reaction N-acetyl-D-muramate 6-phosphate + H2O = N-acetyl-D-glucosamine 6-phosphate + (R)-lactate. It functions in the pathway amino-sugar metabolism; 1,6-anhydro-N-acetylmuramate degradation. The protein operates within amino-sugar metabolism; N-acetylmuramate degradation. It participates in cell wall biogenesis; peptidoglycan recycling. Functionally, specifically catalyzes the cleavage of the D-lactyl ether substituent of MurNAc 6-phosphate, producing GlcNAc 6-phosphate and D-lactate. Together with AnmK, is also required for the utilization of anhydro-N-acetylmuramic acid (anhMurNAc) either imported from the medium or derived from its own cell wall murein, and thus plays a role in cell wall recycling. The protein is N-acetylmuramic acid 6-phosphate etherase of Aeromonas hydrophila subsp. hydrophila (strain ATCC 7966 / DSM 30187 / BCRC 13018 / CCUG 14551 / JCM 1027 / KCTC 2358 / NCIMB 9240 / NCTC 8049).